The following is a 372-amino-acid chain: Cytochrome b (372 aa).

A run of 4 helical transmembrane segments spans residues Phe25–Ile45, Trp69–Ile90, Trp105–Leu125, and Phe170–Met190. Residues His75 and His89 each coordinate heme b. Residues His174 and His188 each contribute to the heme b site. His193 is an a ubiquinone binding site. The next 4 helical transmembrane spans lie at His218–Asn238, Leu280–His300, Leu312–Thr332, and Phe339–Pro358.

The protein belongs to the cytochrome b family. In terms of assembly, the cytochrome bc1 complex contains 3 respiratory subunits (MT-CYB, CYC1 and UQCRFS1), 2 core proteins (UQCRC1 and UQCRC2) and probably 6 low-molecular weight proteins. Heme b is required as a cofactor.

It is found in the mitochondrion inner membrane. Its function is as follows. Component of the ubiquinol-cytochrome c reductase complex (complex III or cytochrome b-c1 complex) that is part of the mitochondrial respiratory chain. The b-c1 complex mediates electron transfer from ubiquinol to cytochrome c. Contributes to the generation of a proton gradient across the mitochondrial membrane that is then used for ATP synthesis. The sequence is that of Cytochrome b (MT-CYB) from Pantherophis bairdi (Baird's ratsnake).